A 198-amino-acid polypeptide reads, in one-letter code: Pyridoxine/pyridoxamine 5'-phosphate oxidase 2 (198 aa).

FMN is bound by residues Arg-42, 59-60 (NT), Lys-66, and 121-122 (RS).

It belongs to the pyridoxamine 5'-phosphate oxidase family. As to quaternary structure, homodimer. FMN serves as cofactor.

It catalyses the reaction pyridoxamine 5'-phosphate + O2 + H2O = pyridoxal 5'-phosphate + H2O2 + NH4(+). The enzyme catalyses pyridoxine 5'-phosphate + O2 = pyridoxal 5'-phosphate + H2O2. It functions in the pathway cofactor metabolism; pyridoxal 5'-phosphate salvage; pyridoxal 5'-phosphate from pyridoxamine 5'-phosphate: step 1/1. Its pathway is cofactor metabolism; pyridoxal 5'-phosphate salvage; pyridoxal 5'-phosphate from pyridoxine 5'-phosphate: step 1/1. Its function is as follows. Catalyzes the oxidation of either pyridoxine 5'-phosphate (PNP) or pyridoxamine 5'-phosphate (PMP) into pyridoxal 5'-phosphate (PLP). Has an in vitro catalytic efficiency for PNP approximately 300-fold lower than that of PPOX1. This Arabidopsis thaliana (Mouse-ear cress) protein is Pyridoxine/pyridoxamine 5'-phosphate oxidase 2 (PPOX2).